The following is a 341-amino-acid chain: MIELKEVVKEYRTKNKEVLAVDHVNLSIRAGSIYGVIGFSGAGKSTLIRMFNHLEAPTSGEVIIDGDHIGQLSKNGLRAKRQKVNMIFQHFNLLWSRTVLKNIMFPLEIAGVPRRRAKQKALELVELVGLKGREKAYPSELSGGQKQRVGIARALANDPTVLLCDEATSALDPQTTDEILDLLLKIREQQNLTIVLITHEMHVIRRICDEVAVMESGKVIEHGPVTQVFENPQHTVTKRFVKEDLNDDFETSLTELEPLEKDAYIVRLVFAGSTTTEPIVSSLSTAYDIKINILEANIKNTKNGTVGFLVLHIPYISSVDFGKFEKELIERQVKMEVLRHG.

In terms of domain architecture, ABC transporter spans 2–241 (IELKEVVKEY…PQHTVTKRFV (240 aa)). Residue 38-45 (GFSGAGKS) coordinates ATP.

Belongs to the ABC transporter superfamily. Methionine importer (TC 3.A.1.24) family. The complex is composed of two ATP-binding proteins (MetN), two transmembrane proteins (MetI) and a solute-binding protein (MetQ).

It localises to the cell membrane. The enzyme catalyses L-methionine(out) + ATP + H2O = L-methionine(in) + ADP + phosphate + H(+). It carries out the reaction D-methionine(out) + ATP + H2O = D-methionine(in) + ADP + phosphate + H(+). In terms of biological role, part of the ABC transporter complex MetNIQ involved in methionine import. Responsible for energy coupling to the transport system. This is Methionine import ATP-binding protein MetN 2 from Staphylococcus aureus (strain N315).